Consider the following 440-residue polypeptide: Cell division protein DivIB (440 aa).

Residues 1 to 10 (MMDDKTKNDQ) are compositionally biased toward basic and acidic residues. 2 disordered regions span residues 1–97 (MMDD…DSNI) and 123–154 (QHQS…TQLK). At 1–174 (MMDDKTKNDQ…RRKRQKRIQY (174 aa)) the chain is on the cytoplasmic side. Over residues 12-21 (ESNEDKDELE) the composition is skewed to acidic residues. Positions 27–39 (TSKKRRQRKRSKA) are enriched in basic residues. Over residues 78–87 (DSASSHANDN) the composition is skewed to low complexity. The segment covering 88-97 (NIDDSTDSNI) has biased composition (acidic residues). Residues 124–134 (HQSAPNEQNSD) show a composition bias toward polar residues. The chain crosses the membrane as a helical span at residues 175-195 (SVITILVLLIAVILIYMFSPL). The POTRA domain maps to 196-264 (SKIAHVNING…NTLNVDITEN (69 aa)). Topologically, residues 196–440 (SKIAHVNING…KINKQSSKNN (245 aa)) are extracellular. The disordered stretch occupies residues 397-440 (YRGNTSTQSESDKNVTKSSQEENQAKEELQSVLNKINKQSSKNN). A compositionally biased stretch (basic and acidic residues) spans 406–425 (ESDKNVTKSSQEENQAKEEL). The span at 427–440 (SVLNKINKQSSKNN) shows a compositional bias: polar residues.

Belongs to the FtsQ/DivIB family. DivIB subfamily.

The protein resides in the cell membrane. Functionally, cell division protein that may be involved in stabilizing or promoting the assembly of the division complex. This Staphylococcus aureus (strain MRSA252) protein is Cell division protein DivIB.